Here is a 220-residue protein sequence, read N- to C-terminus: Large ribosomal subunit protein bL25 (220 aa).

Belongs to the bacterial ribosomal protein bL25 family. CTC subfamily. In terms of assembly, part of the 50S ribosomal subunit; part of the 5S rRNA/L5/L18/L25 subcomplex. Contacts the 5S rRNA. Binds to the 5S rRNA independently of L5 and L18.

In terms of biological role, this is one of the proteins that binds to the 5S RNA in the ribosome where it forms part of the central protuberance. The polypeptide is Large ribosomal subunit protein bL25 (Zymomonas mobilis subsp. mobilis (strain ATCC 31821 / ZM4 / CP4)).